The following is an 81-amino-acid chain: Defensin-like protein 43 (81 aa).

Positions 1 to 27 are cleaved as a signal peptide; sequence MGITKTSVTFLFLLILAAFVSNYNVLA. 4 disulfide bridges follow: Cys40–Cys79, Cys44–Cys67, Cys53–Cys77, and Cys57–Cys78.

The protein belongs to the DEFL family.

The protein resides in the secreted. The polypeptide is Defensin-like protein 43 (Arabidopsis thaliana (Mouse-ear cress)).